Consider the following 403-residue polypeptide: MAKEKVVLAYSGGLDTSVAVKWLTDKGYDVIAVGLDVGEGKDLEFVKQKALQVGAIQSYTIDAKKEYAESFVLPALQAHALYEQKYPLVSALSRPLISKKLVEIAEQTGATAVAHGCTGKGNDQVRFEVSIQALNPNLKVLAPVREWAWSRDEEIEYAKAHNIPIPIDLDNPYSVDQNLWGRSNECGVLEDPWATPPEGAYALTAPLEKTPDTPDIIELSFEKGVPVAINGEAYPLDQLILTLNEIAGKHGVGRIDHVENRLVGIKSREVYECPGAMTLIKAHKELEDLTLPKELAHFKPVIEKKLTELIYEGLWFSSLQPALLAFLKESQTHVTGVVRVKLFKGHAIIEGRKSAYSLYNEKLATYTPDDEFDHSAAVGFISLWGLPTKVHSMVTKEKKEVTL.

9–17 (AYSGGLDTS) provides a ligand contact to ATP. Y86 is an L-citrulline binding site. G116 contacts ATP. L-aspartate-binding residues include T118, N122, and D123. N122 serves as a coordination point for L-citrulline. L-citrulline is bound by residues R126, S174, S183, E259, and Y271.

It belongs to the argininosuccinate synthase family. Type 1 subfamily. As to quaternary structure, homotetramer.

Its subcellular location is the cytoplasm. It catalyses the reaction L-citrulline + L-aspartate + ATP = 2-(N(omega)-L-arginino)succinate + AMP + diphosphate + H(+). It participates in amino-acid biosynthesis; L-arginine biosynthesis; L-arginine from L-ornithine and carbamoyl phosphate: step 2/3. This is Argininosuccinate synthase from Shouchella clausii (strain KSM-K16) (Alkalihalobacillus clausii).